The chain runs to 257 residues: Gamma-secretase subunit APH-1B (257 aa).

7 helical membrane-spanning segments follow: residues 5–25 (VFFGCAFIAFGPALALYVFTI), 32–52 (IIFLIAGAFFWLVSLLISSLV), 70–90 (YLLIFGTFVSVYIQEMFRFAY), 115–135 (LLAYVSGLGFGIMSGVFSFVN), 158–178 (YSAFMTLVIILLHVFWGIVFF), 186–206 (WGILLIVLLTHLLVSAQTFIS), and 213–233 (LASAFIILVLMGTWAFLAAGG).

Belongs to the APH-1 family. Probable component of the gamma-secretase complex, a complex composed of a presenilin homodimer (PSEN1 or PSEN2), nicastrin (NCSTN), APH1 (APH1A or APH1B) and PEN2. Such minimal complex is sufficient for secretase activity, although other components may exist. Interacts with PSEN1 and PSEN2.

The protein localises to the membrane. Probable subunit of the gamma-secretase complex, an endoprotease complex that catalyzes the intramembrane cleavage of integral proteins such as Notch receptors and APP (amyloid-beta precursor protein). It probably represents a stabilizing cofactor for the presenilin homodimer that promotes the formation of a stable complex. Probably present in a minority of gamma-secretase complexes compared to APH1A. This is Gamma-secretase subunit APH-1B (APH1B) from Pongo abelii (Sumatran orangutan).